We begin with the raw amino-acid sequence, 150 residues long: UPF0178 protein Maqu_2186 (150 aa).

This sequence belongs to the UPF0178 family.

This is UPF0178 protein Maqu_2186 from Marinobacter nauticus (strain ATCC 700491 / DSM 11845 / VT8) (Marinobacter aquaeolei).